Consider the following 155-residue polypeptide: Small ribosomal subunit protein uS7c (155 aa).

The protein belongs to the universal ribosomal protein uS7 family. As to quaternary structure, part of the 30S ribosomal subunit.

It is found in the plastid. Its subcellular location is the chloroplast. Functionally, one of the primary rRNA binding proteins, it binds directly to 16S rRNA where it nucleates assembly of the head domain of the 30S subunit. The chain is Small ribosomal subunit protein uS7c (rps7) from Hydrastis canadensis (Goldenseal).